The chain runs to 309 residues: Taste receptor type 2 member 20 (309 aa).

Residues 1-6 (MMSFLH) are Extracellular-facing. Residues 7–27 (IVFSILVVVAFILGNFANGFI) traverse the membrane as a helical segment. Residues 28-46 (ALINFIAWVKRQKISSADQ) lie on the Cytoplasmic side of the membrane. A helical membrane pass occupies residues 47-67 (IIAALAVSRVGLLWVILLHWY). Topologically, residues 68 to 79 (STVLNPTSSNLK) are extracellular. A helical membrane pass occupies residues 80 to 100 (VIIFISNAWAVTNHFSIWLAT). The Cytoplasmic portion of the chain corresponds to 101-125 (SLSIFYLLKIVNFSRLIFHHLKRKA). Residues 126 to 146 (KSVVLVIVLGSLFFLVCHLVM) traverse the membrane as a helical segment. The Extracellular segment spans residues 147 to 178 (KHTYINVWTEECEGNVTWKIKLRNAMHLSNLT). 2 N-linked (GlcNAc...) asparagine glycosylation sites follow: Asn-161 and Asn-176. A helical transmembrane segment spans residues 179 to 199 (VAMLANLIPFTLTLISFLLLI). Residues 200-229 (YSLCKHLKKMQLHGKGSQDPSTKIHIKALQ) are Cytoplasmic-facing. A helical membrane pass occupies residues 230-250 (TVTSFLILLAIYFLCLIISFW). At 251 to 259 (NFKMRPKEI) the chain is on the extracellular side. The chain crosses the membrane as a helical span at residues 260–280 (VLMLCQAFGIIYPSFHSFILI). Over 281–309 (WGNKTLKQTFLSVLWQVTCWAKGQNQSTP) the chain is Cytoplasmic.

The protein belongs to the G-protein coupled receptor T2R family. Expressed in subsets of taste receptor cells of the tongue and exclusively in gustducin-positive cells.

The protein localises to the membrane. Receptor that may play a role in the perception of bitterness and is gustducin-linked. May play a role in sensing the chemical composition of the gastrointestinal content. The activity of this receptor may stimulate alpha gustducin, mediate PLC-beta-2 activation and lead to the gating of TRPM5. This Homo sapiens (Human) protein is Taste receptor type 2 member 20 (TAS2R20).